Reading from the N-terminus, the 109-residue chain is Large ribosomal subunit protein uL22 (109 aa).

It belongs to the universal ribosomal protein uL22 family. In terms of assembly, part of the 50S ribosomal subunit.

This protein binds specifically to 23S rRNA; its binding is stimulated by other ribosomal proteins, e.g. L4, L17, and L20. It is important during the early stages of 50S assembly. It makes multiple contacts with different domains of the 23S rRNA in the assembled 50S subunit and ribosome. Its function is as follows. The globular domain of the protein is located near the polypeptide exit tunnel on the outside of the subunit, while an extended beta-hairpin is found that lines the wall of the exit tunnel in the center of the 70S ribosome. The sequence is that of Large ribosomal subunit protein uL22 from Dechloromonas aromatica (strain RCB).